The following is a 252-amino-acid chain: 7-carboxy-7-deazaguanine synthase (252 aa).

Substrate is bound by residues 22 to 24 (LQG) and Arg-37. The Radical SAM core domain occupies 28-251 (FVGEPQAFVR…QVHKLVDFIP (224 aa)). The [4Fe-4S] cluster site is built by Cys-41, Cys-45, and Cys-48. Thr-102 is a substrate binding site. Residue Gly-104 participates in S-adenosyl-L-methionine binding.

It belongs to the radical SAM superfamily. 7-carboxy-7-deazaguanine synthase family. Homodimer. [4Fe-4S] cluster serves as cofactor. S-adenosyl-L-methionine is required as a cofactor. The cofactor is Mg(2+).

It catalyses the reaction 6-carboxy-5,6,7,8-tetrahydropterin + H(+) = 7-carboxy-7-deazaguanine + NH4(+). The protein operates within purine metabolism; 7-cyano-7-deazaguanine biosynthesis. Its function is as follows. Catalyzes the complex heterocyclic radical-mediated conversion of 6-carboxy-5,6,7,8-tetrahydropterin (CPH4) to 7-carboxy-7-deazaguanine (CDG), a step common to the biosynthetic pathways of all 7-deazapurine-containing compounds. The sequence is that of 7-carboxy-7-deazaguanine synthase from Methanopyrus kandleri (strain AV19 / DSM 6324 / JCM 9639 / NBRC 100938).